We begin with the raw amino-acid sequence, 892 residues long: Major core protein OPG136 precursor (892 aa).

The propeptide occupies 616–698 (SPEGEETIIC…ILDRIITNAG (83 aa)).

It belongs to the orthopxvirus protein OPG136 family. As to quaternary structure, interacts with P39/A4. The precursor is cleaved by OPG083 to give rise to the 62 kDa mature protein during virion maturation. Proteolytic cleavage of major core proteins OPG136, OPG129, and OPG098, which occurs at a late stage of core formation, is required for production of infectious mature virions (MV).

It is found in the virion. Its function is as follows. Core protein 4a is the most abundant virion protein. Major component of the virion core that undergoes proteolytic processing during the immature virion (IV) to mature virion (MV) transition. In Homo sapiens (Human), this protein is Major core protein OPG136 precursor (OPG136).